A 460-amino-acid chain; its full sequence is Monocarboxylate transporter 12 (460 aa).

Residues 1–10 lie on the Cytoplasmic side of the membrane; it reads MTQEKRSLHK. A run of 12 helical transmembrane segments spans residues 11–31, 58–78, 86–106, 115–135, 148–168, 177–197, 246–266, 282–302, 329–349, 354–374, 376–396, and 406–426; these read TPPDGGWGWMIVIGCFFVTVC, AWIHSIVDCSTMLCAPIGSYV, VGIILGGVLASTGLVLSSFAT, LGVLTGLGFALCYSPAIAMVG, IAMSGSGIGTFILAPVVQLLI, LLILGGFVSNLCVCGALMRPI, FIILAVSFLFLAYGCSPPFVY, AFLMSILGIVDIVGNITFGWV, FLPILTCFQLLVPFSVMFGYF, VALIPVITGDVVGTSNLSSAL, VVFFLHAVPYLLSPPIAGWLV, and FLLSGFSMIFCSILLGLAKII. Residues 427–460 lie on the Cytoplasmic side of the membrane; that stretch reads NRIKKNPQATVVRSSDIKQEVWTNGDVSCLNAIS.

It belongs to the major facilitator superfamily. Monocarboxylate porter (TC 2.A.1.13) family.

Its subcellular location is the cell membrane. The protein resides in the basolateral cell membrane. It catalyses the reaction creatine(in) = creatine(out). It carries out the reaction guanidinoacetate(in) = guanidinoacetate(out). Its function is as follows. Functions as a transporter for creatine and as well for its precursor guanidinoacetate. Transport of creatine and GAA is independent of resting membrane potential and extracellular Na(+), Cl(-), or pH. Contributes to the process of creatine biosynthesis and distribution. This is Monocarboxylate transporter 12 (slc16a12) from Xenopus laevis (African clawed frog).